The sequence spans 1290 residues: Nonribosomal peptide synthetase 6 (1290 aa).

The interval 1–27 (MTAIDVPWLSTPRRDNSHGTRSNSSCQ) is disordered. An adenylation region spans residues 260–657 (SYQELDCQAS…AQVEHHLRSC (398 aa)). The Carrier domain occupies 775 to 851 (APETELERKL…GLAQTHRHPV (77 aa)). Residue S812 is modified to O-(pantetheine 4'-phosphoryl)serine. The interval 846–870 (THRHPVRRAEVPRSSHDPDPFGRVR) is disordered. Residues 852-870 (RRAEVPRSSHDPDPFGRVR) show a composition bias toward basic and acidic residues. The tract at residues 914-1162 (GGQLDPEQLR…PCMNIIPVRV (249 aa)) is condensation.

Belongs to the NRP synthetase family.

Nonribosomal peptide synthesis (NRPS) is a key mechanism responsible for the biosynthesis of bioactive metabolites which are potentially contributing to organismal virulence. The sequence is that of Nonribosomal peptide synthetase 6 (NRPS6) from Aspergillus fumigatus (strain ATCC MYA-4609 / CBS 101355 / FGSC A1100 / Af293) (Neosartorya fumigata).